Consider the following 292-residue polypeptide: UPF0725 protein At4g28920 (292 aa).

Residues 1-17 (MSENDSSESDIEMDPEE) are compositionally biased toward acidic residues. The segment at 1–24 (MSENDSSESDIEMDPEEEKVYRRQ) is disordered.

This sequence belongs to the UPF0725 (EMB2204) family.

The sequence is that of UPF0725 protein At4g28920 from Arabidopsis thaliana (Mouse-ear cress).